The primary structure comprises 610 residues: Myoneurin (610 aa).

Positions 24–89 (CDCTIVIGEF…IYTGTLNLDS (66 aa)) constitute a BTB domain. A disordered region spans residues 169 to 197 (QGALAKKSSQTKKKKKAFNSPKTGQNKTV). 2 short sequence motifs (nuclear localization signal) span residues 174 to 190 (KKSS…NSPK) and 257 to 262 (KRKRGK). Residues 188–197 (SPKTGQNKTV) are compositionally biased toward polar residues. Phosphoserine is present on S289. C2H2-type zinc fingers lie at residues 302–324 (PMCN…MRIH), 330–352 (YVCH…VRTH), 358–381 (YKCE…RMHH), 387–409 (YKCD…ARKH), 415–437 (YVCD…VRRH), 443–465 (YVCD…SRKH), 471–493 (YICG…FRSH), and 499–522 (FICE…TKVH). A disordered region spans residues 521 to 556 (VHSGADKTLDSSAEDHTLSEQDSIQKSPLSETMDVK). A compositionally biased stretch (basic and acidic residues) spans 523–539 (SGADKTLDSSAEDHTLS). Over residues 540-550 (EQDSIQKSPLS) the composition is skewed to polar residues.

This sequence belongs to the krueppel C2H2-type zinc-finger protein family. As to expression, mainly expressed in the neuromuscular system. Located in and around synaptic myonuclei in adult muscle. Expression is dysregulated after nerve injury. Also found in the testis, ovary and placenta.

The protein localises to the nucleus. The chain is Myoneurin (MYNN) from Homo sapiens (Human).